We begin with the raw amino-acid sequence, 252 residues long: Carbohydrate deacetylase (252 aa).

His59 and His122 together coordinate Mg(2+).

It belongs to the YdjC deacetylase family. Homodimer. Mg(2+) serves as cofactor.

Functionally, probably catalyzes the deacetylation of acetylated carbohydrates an important step in the degradation of oligosaccharides. The chain is Carbohydrate deacetylase from Vibrio cholerae serotype O1 (strain ATCC 39315 / El Tor Inaba N16961).